Reading from the N-terminus, the 656-residue chain is Protein teflon (656 aa).

A C2H2-type 1 zinc finger spans residues leucine 33–histidine 56. Residues aspartate 80–asparagine 131 form a disordered region. Residues alanine 89 to serine 104 are compositionally biased toward polar residues. C2H2-type zinc fingers lie at residues tyrosine 606–histidine 628 and phenylalanine 632–histidine 655.

The protein belongs to the Teflon family.

It localises to the nucleus. The protein resides in the chromosome. Specifically required in males for proper segregation of autosomal bivalents at meiosis I. Expression is required in the male germ line prior to spermatocyte stage S4. May have a role as a bridging molecule maintaining adhesion to hold autosome bivalents together via heterochromatic connections. This chain is Protein teflon, found in Drosophila sechellia (Fruit fly).